A 118-amino-acid chain; its full sequence is uncharacterized protein (118 aa).

The protein belongs to the HesB/IscA family. Ycf83 subfamily.

This is an uncharacterized protein from Synechocystis sp. (strain ATCC 27184 / PCC 6803 / Kazusa).